A 367-amino-acid chain; its full sequence is Peptide chain release factor 2 (367 aa).

At glutamine 249 the chain carries N5-methylglutamine.

It belongs to the prokaryotic/mitochondrial release factor family. Methylated by PrmC. Methylation increases the termination efficiency of RF2.

The protein localises to the cytoplasm. Peptide chain release factor 2 directs the termination of translation in response to the peptide chain termination codons UGA and UAA. This is Peptide chain release factor 2 from Thermotoga sp. (strain RQ2).